A 307-amino-acid polypeptide reads, in one-letter code: Elongation factor Ts (307 aa).

Positions 80–83 (TDFV) are involved in Mg(2+) ion dislocation from EF-Tu.

It belongs to the EF-Ts family.

The protein localises to the cytoplasm. In terms of biological role, associates with the EF-Tu.GDP complex and induces the exchange of GDP to GTP. It remains bound to the aminoacyl-tRNA.EF-Tu.GTP complex up to the GTP hydrolysis stage on the ribosome. This Rhizorhabdus wittichii (strain DSM 6014 / CCUG 31198 / JCM 15750 / NBRC 105917 / EY 4224 / RW1) (Sphingomonas wittichii) protein is Elongation factor Ts.